Reading from the N-terminus, the 190-residue chain is MPKRKKQDQPPPLPQQQQHLALSERDEPGDEEDERPMGPPSLLGPPPMANGKPGDPKSAFHRGPPGSRGRMIPPLLSLPPPPRGRGYIRGGLGPRSSPYGRGWWGINAEPPFPGPGHGGPSRESFYKEARNPRRLRSWSLVKNTYPPKDSPQMMEDKSDRPVCRHFSKKGHCRYEDHCAFYHPGVNGPPL.

Disordered stretches follow at residues 1–94, 110–130, and 142–161; these read MPKR…GLGP, PPFP…KEAR, and KNTY…SDRP. The span at 37-48 shows a compositional bias: pro residues; sequence MGPPSLLGPPPM. The C3H1-type zinc-finger motif lies at 157 to 185; sequence KSDRPVCRHFSKKGHCRYEDHCAFYHPGV.

The polypeptide is Proline-rich protein 3 (Prr3) (Mus musculus (Mouse)).